We begin with the raw amino-acid sequence, 297 residues long: Protoheme IX farnesyltransferase (297 aa).

The next 9 helical transmembrane spans lie at 23–43, 49–69, 93–113, 117–137, 144–164, 171–191, 215–235, 238–258, and 275–295; these read VTQL…PGMP, VFGT…NCLI, IQVL…LYHL, LTMW…TVIL, NIVI…AAVA, AWVL…ALAL, RLHI…PYAI, SGAL…WYAW, and FSIL…WVGL.

Belongs to the UbiA prenyltransferase family. Protoheme IX farnesyltransferase subfamily.

Its subcellular location is the cell inner membrane. The catalysed reaction is heme b + (2E,6E)-farnesyl diphosphate + H2O = Fe(II)-heme o + diphosphate. Its pathway is porphyrin-containing compound metabolism; heme O biosynthesis; heme O from protoheme: step 1/1. Converts heme B (protoheme IX) to heme O by substitution of the vinyl group on carbon 2 of heme B porphyrin ring with a hydroxyethyl farnesyl side group. The protein is Protoheme IX farnesyltransferase of Bordetella bronchiseptica (strain ATCC BAA-588 / NCTC 13252 / RB50) (Alcaligenes bronchisepticus).